We begin with the raw amino-acid sequence, 242 residues long: Pyridoxine 5'-phosphate synthase (242 aa).

Asn6 provides a ligand contact to 3-amino-2-oxopropyl phosphate. Residue 8-9 participates in 1-deoxy-D-xylulose 5-phosphate binding; the sequence is DH. Arg17 contributes to the 3-amino-2-oxopropyl phosphate binding site. Catalysis depends on His42, which acts as the Proton acceptor. Arg44 and His49 together coordinate 1-deoxy-D-xylulose 5-phosphate. Glu69 serves as the catalytic Proton acceptor. 1-deoxy-D-xylulose 5-phosphate is bound at residue Thr99. His190 serves as the catalytic Proton donor. 3-amino-2-oxopropyl phosphate contacts are provided by residues Gly191 and 212-213; that span reads GH.

This sequence belongs to the PNP synthase family. Homooctamer; tetramer of dimers.

It is found in the cytoplasm. The catalysed reaction is 3-amino-2-oxopropyl phosphate + 1-deoxy-D-xylulose 5-phosphate = pyridoxine 5'-phosphate + phosphate + 2 H2O + H(+). It functions in the pathway cofactor biosynthesis; pyridoxine 5'-phosphate biosynthesis; pyridoxine 5'-phosphate from D-erythrose 4-phosphate: step 5/5. In terms of biological role, catalyzes the complicated ring closure reaction between the two acyclic compounds 1-deoxy-D-xylulose-5-phosphate (DXP) and 3-amino-2-oxopropyl phosphate (1-amino-acetone-3-phosphate or AAP) to form pyridoxine 5'-phosphate (PNP) and inorganic phosphate. The polypeptide is Pyridoxine 5'-phosphate synthase (Neisseria meningitidis serogroup B (strain ATCC BAA-335 / MC58)).